The sequence spans 359 residues: Peptide chain release factor 1 (359 aa).

Glutamine 235 is subject to N5-methylglutamine. Residues 283–305 are disordered; the sequence is QKAESERSASRKTQVGSGDRSER.

This sequence belongs to the prokaryotic/mitochondrial release factor family. Post-translationally, methylated by PrmC. Methylation increases the termination efficiency of RF1.

The protein resides in the cytoplasm. In terms of biological role, peptide chain release factor 1 directs the termination of translation in response to the peptide chain termination codons UAG and UAA. This chain is Peptide chain release factor 1, found in Bartonella bacilliformis (strain ATCC 35685 / KC583 / Herrer 020/F12,63).